A 105-amino-acid polypeptide reads, in one-letter code: Phosphoribosyl-ATP pyrophosphatase (105 aa).

This sequence belongs to the PRA-PH family.

Its subcellular location is the cytoplasm. The enzyme catalyses 1-(5-phospho-beta-D-ribosyl)-ATP + H2O = 1-(5-phospho-beta-D-ribosyl)-5'-AMP + diphosphate + H(+). It functions in the pathway amino-acid biosynthesis; L-histidine biosynthesis; L-histidine from 5-phospho-alpha-D-ribose 1-diphosphate: step 2/9. This chain is Phosphoribosyl-ATP pyrophosphatase, found in Vesicomyosocius okutanii subsp. Calyptogena okutanii (strain HA).